We begin with the raw amino-acid sequence, 196 residues long: Alpha-crystallin A chain (196 aa).

An N-acetylmethionine modification is found at Met-1. Residues 1–63 (MDVTIQHPWF…RTVLDSGISE (63 aa)) are required for complex formation with BFSP1 and BFSP2. Gln-6 carries the post-translational modification Deamidated glutamine; partial. Ser-45 carries the post-translational modification Phosphoserine. Gln-50 carries the post-translational modification Deamidated glutamine; partial. Positions 76 to 185 (HAGNPKNNPI…GHSERAIPVS (110 aa)) constitute a sHSP domain. Lys-93 and Lys-122 each carry N6-acetyllysine. A Zn(2+)-binding site is contributed by His-123. The residue at position 124 (Asn-124) is a Deamidated asparagine; partial. Zn(2+) is bound by residues Glu-125 and His-130. Ser-145 is subject to Phosphoserine. Position 146 is a deamidated asparagine; partial (Asn-146). The disordered stretch occupies residues 168-196 (KVQSGLDAGHSERAIPVSREEKPSSAPSS). Residue Gln-170 is modified to Deamidated glutamine; partial. Over residues 176-190 (GHSERAIPVSREEKP) the composition is skewed to basic and acidic residues. His-177 provides a ligand contact to Zn(2+). O-linked (GlcNAc) serine glycosylation occurs at Ser-185.

Belongs to the small heat shock protein (HSP20) family. In terms of assembly, heteromer composed of three CRYAA and one CRYAB subunits. Inter-subunit bridging via zinc ions enhances stability, which is crucial as there is no protein turn over in the lens. Can also form homodimers and homotetramers (dimers of dimers) which serve as the building blocks of homooligomers. Within homooligomers, the zinc-binding motif is created from residues of 3 different molecules. His-123 and Glu-125 from one molecule are ligands of the zinc ion, and His-130 and His-177 residues from additional molecules complete the site with tetrahedral coordination geometry. Part of a complex required for lens intermediate filament formation composed of BFSP1, BFSP2 and CRYAA. Post-translationally, acetylation at Lys-93 may increase chaperone activity. Undergoes age-dependent proteolytical cleavage at the C-terminus.

The protein localises to the cytoplasm. It is found in the nucleus. Contributes to the transparency and refractive index of the lens. Acts as a chaperone, preventing aggregation of various proteins under a wide range of stress conditions. Required for the correct formation of lens intermediate filaments as part of a complex composed of BFSP1, BFSP2 and CRYAA. The protein is Alpha-crystallin A chain (CRYAA) of Mesocricetus auratus (Golden hamster).